The chain runs to 360 residues: Protein phosphatase 1 regulatory subunit 7 (360 aa).

The tract at residues 1–65 (MAAERGAGQQ…DEDPEEGQEL (65 aa)) is disordered. Residue Ala-2 is modified to N-acetylalanine. Residues Ser-12, Ser-24, Ser-27, Ser-44, and Ser-47 each carry the phosphoserine modification. Basic and acidic residues predominate over residues 17–34 (EVDRRVESEESGDEEGKK). Residues 53-63 (ERGDEDPEEGQ) are compositionally biased toward acidic residues. LRR repeat units follow at residues 77 to 98 (DAED…EVLK), 99 to 120 (KVKT…EGLQ), 121 to 142 (SLRE…DALT), 143 to 164 (ELEV…DKLT), 165 to 186 (RLKK…SSLH), 187 to 208 (QLQM…DTLT), 209 to 230 (NLES…DALT), 231 to 252 (NLTV…QSLV), 253 to 274 (NLRE…DNNN), 275 to 296 (KLTM…SHLT), and 297 to 318 (ELQE…DELK). Position 322 is a phosphoserine (Ser-322). An LRRCT domain is found at 331–360 (NPLQRDPQYRRKIMLALPSVRQIDATFVRF).

It belongs to the SDS22 family. As to quaternary structure, interacts with PPP1CA, PPP1CB and PPP1CC/PPP1G. Interacts with PPP1CC isoform 2 in motile caudal epididymal spermatozoa. In terms of tissue distribution, expressed in epididymal spermatozoa including the principal piece of the flagellum and the head-neck junction.

The protein localises to the nucleus. Functionally, regulatory subunit of protein phosphatase 1. Inactivates the PPP1CC isoform 2 during epididymal sperm maturation. The protein is Protein phosphatase 1 regulatory subunit 7 (PPP1R7) of Bos taurus (Bovine).